Reading from the N-terminus, the 893-residue chain is Major vault protein (893 aa).

A2 is subject to N-acetylalanine. MVP repeat units lie at residues 2 to 56 (ATEE…VPPR), 57 to 111 (HYCT…DITP), 112 to 164 (LQVV…EIIQ), 165 to 217 (ATII…DLVD), 218 to 272 (AVIL…GVVP), 273 to 323 (ITTL…IQDV), 324 to 379 (YVLS…ERQA), 380 to 457 (IPLD…KTRV), and 458 to 520 (VSYR…LLGP). K444 is covalently cross-linked (Glycyl lysine isopeptide (Lys-Gly) (interchain with G-Cter in SUMO2)). A Phosphoserine modification is found at S445. K704 is covalently cross-linked (Glycyl lysine isopeptide (Lys-Gly) (interchain with G-Cter in SUMO2)). The tract at residues 856–893 (QPLGRRVASGPSPGEGISPQSAQAPQAPGDNHVVPVLR) is disordered.

In terms of assembly, the vault ribonucleoprotein particle is a huge (400 A x 670 A) cage structure of 12.9 MDa. It consists of a dimer of half-vaults, with each half-vault comprising 39 identical major vault protein (MVP) chains, PARP4 and one or more vault RNAs (vRNAs). Interacts with TEP1. Interacts with PTEN and activated MAPK1. The phosphorylated protein interacts with the SH2 domains of PTPN11 and SRC. Interacts with APEX1. May interact with ZNF540. In terms of processing, phosphorylated on Tyr residues after EGF stimulation. Dephosphorylated by PTPN11.

Its subcellular location is the cytoplasm. The protein localises to the nucleus. Functionally, required for normal vault structure. Vaults are multi-subunit structures that may act as scaffolds for proteins involved in signal transduction. Vaults may also play a role in nucleo-cytoplasmic transport. Down-regulates IFNG-mediated STAT1 signaling and subsequent activation of JAK. Down-regulates SRC activity and signaling through MAP kinases. This chain is Major vault protein (MVP), found in Pongo abelii (Sumatran orangutan).